Reading from the N-terminus, the 367-residue chain is Alginate lyase (367 aa).

Positions 1-27 are cleaved as a signal peptide; that stretch reads MKTSHLIRIALPGALAAALLASQVSQA. Substrate is bound by residues 65-66, 138-139, and Tyr256; these read SK and HT.

Belongs to the polysaccharide lyase 5 family.

Its subcellular location is the periplasm. The enzyme catalyses Eliminative cleavage of alginate to give oligosaccharides with 4-deoxy-alpha-L-erythro-hex-4-enuronosyl groups at their non-reducing ends and beta-D-mannuronate at their reducing end.. In terms of biological role, catalyzes the depolymerization of alginate by cleaving the beta-1,4 glycosidic bond between two adjacent sugar residues via a beta-elimination mechanism. May serve to degrade mislocalized alginate that is trapped in the periplasmic space. The polypeptide is Alginate lyase (Pseudomonas aeruginosa (strain LESB58)).